The following is a 110-amino-acid chain: DNA-binding protein Mhun_3016 (110 aa).

The protein belongs to the PDCD5 family.

This Methanospirillum hungatei JF-1 (strain ATCC 27890 / DSM 864 / NBRC 100397 / JF-1) protein is DNA-binding protein Mhun_3016.